Consider the following 207-residue polypeptide: Outer-membrane lipoprotein LolB (207 aa).

An N-terminal signal peptide occupies residues 1-21; that stretch reads MPLPDFRLIRLLPLASLVLTA. Residue C22 is the site of N-palmitoyl cysteine attachment. C22 is lipidated: S-diacylglycerol cysteine.

This sequence belongs to the LolB family. As to quaternary structure, monomer.

It localises to the cell outer membrane. Plays a critical role in the incorporation of lipoproteins in the outer membrane after they are released by the LolA protein. This Escherichia fergusonii (strain ATCC 35469 / DSM 13698 / CCUG 18766 / IAM 14443 / JCM 21226 / LMG 7866 / NBRC 102419 / NCTC 12128 / CDC 0568-73) protein is Outer-membrane lipoprotein LolB.